The chain runs to 201 residues: Ribosomal RNA large subunit methyltransferase E (201 aa).

S-adenosyl-L-methionine is bound by residues G40, W42, D62, D78, and D101. K141 functions as the Proton acceptor in the catalytic mechanism.

This sequence belongs to the class I-like SAM-binding methyltransferase superfamily. RNA methyltransferase RlmE family.

The protein resides in the cytoplasm. The catalysed reaction is uridine(2552) in 23S rRNA + S-adenosyl-L-methionine = 2'-O-methyluridine(2552) in 23S rRNA + S-adenosyl-L-homocysteine + H(+). In terms of biological role, specifically methylates the uridine in position 2552 of 23S rRNA at the 2'-O position of the ribose in the fully assembled 50S ribosomal subunit. This is Ribosomal RNA large subunit methyltransferase E from Anaplasma marginale (strain Florida).